The following is a 212-amino-acid chain: Lipid A acyltransferase PagP (212 aa).

An N-terminal signal peptide occupies residues 1–26; the sequence is MSSTYFHSSLLAATLFSVTLTAPAFA. Over residues 29 to 44 the composition is skewed to low complexity; that stretch reads NTQNTPQTITTKKPQP. Residues 29 to 50 form a disordered region; that stretch reads NTQNTPQTITTKKPQPAENTFS. Active-site residues include H84, D127, and S128.

This sequence belongs to the lipid A palmitoyltransferase family. In terms of assembly, homodimer.

The protein localises to the cell outer membrane. The catalysed reaction is a lipid A + a 1,2-diacyl-sn-glycero-3-phosphocholine = a hepta-acyl lipid A + a 2-acyl-sn-glycero-3-phosphocholine. It catalyses the reaction a lipid IVA + a 1,2-diacyl-sn-glycero-3-phosphocholine = a lipid IVB + a 2-acyl-sn-glycero-3-phosphocholine. The enzyme catalyses a lipid IIA + a 1,2-diacyl-sn-glycero-3-phosphocholine = a lipid IIB + a 2-acyl-sn-glycero-3-phosphocholine. In terms of biological role, transfers a fatty acid residue from the sn-1 position of a phospholipid to the N-linked hydroxyfatty acid chain on the proximal unit of lipid A or its precursors. This Proteus mirabilis (strain HI4320) protein is Lipid A acyltransferase PagP.